The following is a 459-amino-acid chain: Vanillin aminotransferase (459 aa).

Pyridoxal 5'-phosphate is bound by residues 115–116 (GS) and D255. K284 carries the post-translational modification N6-(pyridoxal phosphate)lysine. Residue 320–321 (FT) participates in pyridoxal 5'-phosphate binding. A coiled-coil region spans residues 428–459 (LSLEELDELIRIYGKALKDTEKRVEELKSQKK).

This sequence belongs to the class-III pyridoxal-phosphate-dependent aminotransferase family. In terms of tissue distribution, expressed in placental tissue of immature fruit.

The enzyme catalyses vanillin + L-alanine = vanillylamine + pyruvate. Its pathway is aromatic compound metabolism; phenylpropanoid biosynthesis. Functionally, involved in the biosynthesis of capsaicinoids natural products, pungent alkaloids synthesized from phenylpropanoid intermediates in the placental tissue of chili pepper fruit acting as repellant on herbivorous mammals and conferring spiciness to hot peppers. Can transfer an amine from vanillylamine to pyruvate forming vanillin and L-alanine. Can use pyruvate or oxaloacetate, but not 2-oxoglutarate as amino group acceptors. Is able to convert (S)-1-phenylethylamine into acetophenone in vitro. This Capsicum chinense (Scotch bonnet) protein is Vanillin aminotransferase.